Consider the following 319-residue polypeptide: Cell division protein FtsN (319 aa).

The interval 1 to 30 is disordered; sequence MAQRDYVRRSQPAPSRRKKSTSRKKQRNLP. Residues 1-33 are Cytoplasmic-facing; it reads MAQRDYVRRSQPAPSRRKKSTSRKKQRNLPAVS. The segment at 4–6 is mediates interaction with FtsA; sequence RDY. Basic residues predominate over residues 15–27; the sequence is SRRKKSTSRKKQR. Residues 34 to 54 traverse the membrane as a helical segment; it reads PAMVAIAAAVLVTFIGGLYFI. Over 55-319 the chain is Periplasmic; it reads THHKKEESET…TNCIRLAAGG (265 aa). Disordered regions lie at residues 60-79 and 89-113; these read EESE…PPKP and LESR…TPEQ. Tandem repeats lie at residues 115 to 120, 145 to 150, 197 to 200, and 220 to 223. Residues 115 to 150 form a 2 X 6 AA repeats region; sequence TPEQRQLLEQMQADMRQQPTQLVEVPWNEQTPEQRQ. A disordered region spans residues 140–245; that stretch reads PWNEQTPEQR…PKPTAEKKDE (106 aa). Residues 143 to 171 are compositionally biased toward low complexity; the sequence is EQTPEQRQQTLQRQRQAQQLAEQQRLAQQ. Positions 172 to 221 are enriched in polar residues; it reads SRTTEQSWQQQTRTSQAAPVQAQPRQSKPASSQQPYQDLLQTPAHTTAQS. Positions 197–223 are 2 X 4 AA repeats; it reads QSKPASSQQPYQDLLQTPAHTTAQSKP. A compositionally biased stretch (low complexity) spans 222–238; sequence KPQQAAPVARAADAPKP. The region spanning 242 to 316 is the SPOR domain; it reads KKDERRWMVQ…AGHTNCIRLA (75 aa). A disulfide bond links cysteine 252 and cysteine 312.

The protein belongs to the FtsN family. As to quaternary structure, interacts with FtsA via its N-terminal cytoplasmic domain. Interacts with ZapA, FtsQ, FtsW and FtsI.

Its subcellular location is the cell inner membrane. Essential cell division protein that activates septal peptidoglycan synthesis and constriction of the cell. Acts on both sides of the membrane, via interaction with FtsA in the cytoplasm and interaction with the FtsQBL complex in the periplasm. These interactions may induce a conformational switch in both FtsA and FtsQBL, leading to septal peptidoglycan synthesis by FtsI and associated synthases. Required for full FtsI activity. Required for recruitment of AmiC to the septal ring. The protein is Cell division protein FtsN of Escherichia coli (strain K12).